Here is a 116-residue protein sequence, read N- to C-terminus: Nucleoid-associated protein Tfu_0045 (116 aa).

The protein belongs to the YbaB/EbfC family. Homodimer.

Its subcellular location is the cytoplasm. The protein resides in the nucleoid. Binds to DNA and alters its conformation. May be involved in regulation of gene expression, nucleoid organization and DNA protection. This chain is Nucleoid-associated protein Tfu_0045, found in Thermobifida fusca (strain YX).